A 544-amino-acid polypeptide reads, in one-letter code: MPLFSKRKNNTDSKDKQNTDERNQEQQQEKERPVLISPSLAKNIAETKKEVGSSSDVIIREIKIGEQDHVHLAVIYISGLVDNNTIHESLIDPLVQDESIQNTHAIQQILEKTLPLGGVKAEKSWDKLFSELMLGNALIFADGHDEALICSTQGGEQRSIQEPSTQVSFRGPRQGFTESLQTNISMIRRYIKNPNLWVEKMKKGSVTNTDIALMYIQGICDEKVLKEVKQRLEKIDIDSILESGYIEQLIEDETFTTFPTMYHTERPDVVAGNLLEGRFAIIVDGTPFVLIAPALFVQFFQSVEDYYSRFDIATSIRILRVLVFFISLVAPAVYVAATTFHQEMIPTQLLVVIAAQREIVPFPAVVEALTMEVAFEILREAGVRLPRVVGSAVSIVGALVIGQAAVQAGIVSPAMVIIVALTAIASFATPAFAMAISARLIRFIFIIASAVMGFYGLILGIIMMFVHLCSLRSFGVPYMSPLAPFSSQGVKDALFRVPWWADEKRPESVSKEDKVRQGKDQRPEPAASRGMVNKDLEEGDQNGT.

Positions Met-1 to Ile-36 are disordered. Over residues Asn-9 to Pro-33 the composition is skewed to basic and acidic residues. 5 consecutive transmembrane segments (helical) span residues Phe-279–Phe-299, Val-321–His-341, Ala-392–Ser-412, Val-416–Ile-436, and Phe-443–Met-463. Residues Lys-504–Pro-523 are compositionally biased toward basic and acidic residues. The tract at residues Lys-504–Thr-544 is disordered.

The protein belongs to the GerABKA family.

The protein localises to the cell membrane. Functionally, involved in the germination response to the combination of glucose, fructose, L-asparagine, and KCl. This chain is Spore germination protein KA (gerKA), found in Bacillus subtilis (strain 168).